We begin with the raw amino-acid sequence, 162 residues long: G/U mismatch-specific DNA glycosylase (162 aa).

This sequence belongs to the uracil-DNA glycosylase (UDG) superfamily. TDG/mug family. Binds DNA as a monomer.

It is found in the cytoplasm. The catalysed reaction is Specifically hydrolyzes mismatched double-stranded DNA and polynucleotides, releasing free uracil.. Its function is as follows. Excises ethenocytosine and uracil, which can arise by alkylation or deamination of cytosine, respectively, from the corresponding mispairs with guanine in ds-DNA. It is capable of hydrolyzing the carbon-nitrogen bond between the sugar-phosphate backbone of the DNA and the mispaired base. The complementary strand guanine functions in substrate recognition. Required for DNA damage lesion repair in stationary-phase cells. The sequence is that of G/U mismatch-specific DNA glycosylase from Serratia proteamaculans (strain 568).